The chain runs to 1131 residues: Filamin A-interacting protein 1-like (1131 aa).

The tract at residues Met1–Thr62 is disordered. Positions Val50 to Thr62 are enriched in basic and acidic residues. 2 coiled-coil regions span residues Asn139–Val583 and Ser610–Arg780. Ser789 carries the post-translational modification Phosphoserine. Phosphothreonine occurs at positions 984 and 992. A Phosphoserine modification is found at Ser1050.

The protein belongs to the FILIP1 family.

The protein localises to the cytoplasm. It localises to the membrane. It is found in the nucleus. Acts as a regulator of the antiangiogenic activity on endothelial cells. When overexpressed in endothelial cells, leads to inhibition of cell proliferation and migration and an increase in apoptosis. Inhibits melanoma growth When expressed in tumor-associated vasculature. The polypeptide is Filamin A-interacting protein 1-like (Filip1l) (Mus musculus (Mouse)).